The following is a 481-amino-acid chain: 1-acylglycerol-3-phosphate O-acyltransferase PNPLA3 (481 aa).

The Cytoplasmic segment spans residues 1-41 (MYDAERGWSLSFAGCGFLGFYHVGATRCLSEHAPHLLRDAR). The 170-residue stretch at 10–179 (LSFAGCGFLG…SDNVPFIDAK (170 aa)) folds into the PNPLA domain. The GXGXXG motif lies at 14 to 19 (GCGFLG). The chain crosses the membrane as a helical; Signal-anchor for type II membrane protein span at residues 42–62 (MLFGASAGALHCVGVLSGIPL). Positions 45 to 49 (GASAG) match the GXSXG motif. The active-site Nucleophile is S47. Residues 63–481 (EQTLQVLSDL…FPSFSLEKSL (419 aa)) are Lumenal-facing. A glycan (N-linked (GlcNAc...) asparagine) is linked at N89. D166 serves as the catalytic Proton acceptor. A DGA/G motif is present at residues 166 to 168 (DGG). N-linked (GlcNAc...) asparagine glycosylation occurs at N280.

Its subcellular location is the membrane. It localises to the lipid droplet. The enzyme catalyses a 1-acyl-sn-glycero-3-phosphate + an acyl-CoA = a 1,2-diacyl-sn-glycero-3-phosphate + CoA. It catalyses the reaction a triacylglycerol + H2O = a diacylglycerol + a fatty acid + H(+). The catalysed reaction is a 1-acylglycerol + a 1,3-diacylglycerol = a triacylglycerol + glycerol. It carries out the reaction a 1-acylglycerol + a 1,2-diacylglycerol = a triacylglycerol + glycerol. The enzyme catalyses 2 a 1-acylglycerol = a 1,2-diacylglycerol + glycerol. It catalyses the reaction 1-(9Z-octadecenoyl)-sn-glycero-3-phosphate + (9Z)-octadecenoyl-CoA = 1,2-di-(9Z-octadecenoyl)-sn-glycero-3-phosphate + CoA. The catalysed reaction is 1-(9Z-octadecenoyl)-sn-glycero-3-phosphate + hexadecanoyl-CoA = 1-(9Z)-octadecenoyl-2-hexadecanoyl-sn-glycero-3-phosphate + CoA. It carries out the reaction 1-(9Z-octadecenoyl)-sn-glycero-3-phosphate + (9Z,12Z)-octadecadienoyl-CoA = 1-(9Z)-octadecenoyl-2-(9Z,12Z)-octadecadienoyl-sn-glycero-3-phosphate + CoA. The enzyme catalyses 1-(9Z-octadecenoyl)-sn-glycero-3-phosphate + (5Z,8Z,11Z,14Z)-eicosatetraenoyl-CoA = 1-(9Z)-octadecenoyl-2-(5Z,8Z,11Z,14Z)-eicosatetraenoyl-sn-glycero-3-phosphate + CoA. It catalyses the reaction 2 1-(9Z-octadecenoyl)-glycerol = 1,2-di-(9Z-octadecenoyl)-glycerol + glycerol. The catalysed reaction is 1-(9Z-octadecenoyl)-glycerol + 1,2-di-(9Z-octadecenoyl)-glycerol = 1,2,3-tri-(9Z-octadecenoyl)-glycerol + glycerol. It carries out the reaction 1-(9Z-octadecenoyl)-glycerol + 1,3-di-(9Z-octadecenoyl)-glycerol = 1,2,3-tri-(9Z-octadecenoyl)-glycerol + glycerol. The enzyme catalyses 1,2,3-tri-(9Z-octadecenoyl)-glycerol + H2O = 1,3-di-(9Z-octadecenoyl)-glycerol + (9Z)-octadecenoate + H(+). It catalyses the reaction a 1,2-diacyl-sn-glycero-3-phosphocholine + H2O = a 1-acyl-sn-glycero-3-phosphocholine + a fatty acid + H(+). The protein operates within phospholipid metabolism. Its pathway is glycerolipid metabolism. The triglyceride lipase activity is inhibited by BEL ((E)-6-(bromomethylene)-3-(1-naphthalenyl)-2H-tetrahydropyran-2-one), a suicide substrate inhibitor. Its function is as follows. Specifically catalyzes coenzyme A (CoA)-dependent acylation of 1-acyl-sn-glycerol 3-phosphate (2-lysophosphatidic acid/LPA) to generate phosphatidic acid (PA), an important metabolic intermediate and precursor for both triglycerides and glycerophospholipids. Does not esterify other lysophospholipids. Acyl donors are long chain (at least C16) fatty acyl-CoAs: arachidonoyl-CoA, linoleoyl-CoA, oleoyl-CoA and at a lesser extent palmitoyl-CoA. Additionally possesses low triacylglycerol lipase and CoA-independent acylglycerol transacylase activities and thus may play a role in acyl-chain remodeling of triglycerides. In vitro may express hydrolytic activity against glycerolipids triacylglycerol, diacylglycerol and monoacylglycerol, with a strong preference for oleic acid as the acyl moiety. However, the triacylglycerol hydrolase activity is controversial and may be very low. Possesses phospholipase A2 activity. This is 1-acylglycerol-3-phosphate O-acyltransferase PNPLA3 from Homo sapiens (Human).